The following is a 544-amino-acid chain: Ell-associated factor Eaf (544 aa).

The disordered stretch occupies residues 147–544 (QSVPMNMGHQ…LSSNSSDDDD (398 aa)). The span at 193 to 202 (SSKDKVDFKP) shows a compositional bias: basic and acidic residues. Ser-205 carries the phosphoserine modification. Low complexity predominate over residues 264–273 (SGSSTGSSSG). Basic residues predominate over residues 287–299 (GKQRQAHGKRQQI). Low complexity-rich tracts occupy residues 305-319 (PPVQ…QQQP), 333-374 (QPHP…QQRP), and 396-407 (ASQSVAQAAAVL). The span at 425-440 (DSSDSDSGSDSDDSTE) shows a compositional bias: acidic residues. 3 stretches are compositionally biased toward low complexity: residues 450–483 (EQQQ…HMNQ), 503–513 (QQPQPQPQQQQ), and 526–544 (NDLL…DDDD).

This sequence belongs to the EAF family.

It is found in the nucleus. Functionally, promotes transcriptional elongation by Su(Tpl)/ELL. Essential for development. This Drosophila persimilis (Fruit fly) protein is Ell-associated factor Eaf.